Consider the following 340-residue polypeptide: Speriolin-like protein (340 aa).

Disordered stretches follow at residues 42 to 73 (GGGH…RFTS) and 94 to 135 (APLS…KLSP). Ser-60 is modified (phosphoserine). Positions 123-133 (PHSHRGTDRKL) are enriched in basic and acidic residues. The residue at position 134 (Ser-134) is a Phosphoserine.

Belongs to the speriolin family.

It is found in the cytoplasm. The sequence is that of Speriolin-like protein (SPATC1L) from Homo sapiens (Human).